Here is a 935-residue protein sequence, read N- to C-terminus: Coatomer subunit gamma (935 aa).

HEAT repeat units follow at residues 258–296 (PQLFSQFRPLLSDWLSNKFESVQLETAKLITSFATRNSR), 337–372 (PEKIVVCNPELESLINDSNRNISTYAITTLLKTGTS), 373–410 (KNISSLISTITNFIHDVSDDFKIIIIDAVRTLSLNFPQ), 412–449 (WKSILNFLIDVLKNSEGGFKFKNSIVEALIDIVSFVPQ), and 524–562 (PTLYESIISLLKRIANDKDDEVRDRATIALEFIDSARNK). The disordered stretch occupies residues 630 to 656 (KSETTLDTTPEAESVPEKRADANSFAG). T638 is subject to Phosphothreonine. S643 is modified (phosphoserine). Residue K647 forms a Glycyl lysine isopeptide (Lys-Gly) (interchain with G-Cter in ubiquitin) linkage. Residue S653 is modified to Phosphoserine.

This sequence belongs to the COPG family. In terms of assembly, oligomeric complex that consists of at least the alpha, beta, beta', gamma, delta, epsilon and zeta subunits. Interacts (via C-terminus) with GEA1 (via N-terminal region) and KEI1 (via C-terminal region).

The protein localises to the cytoplasm. It is found in the golgi apparatus membrane. It localises to the cytoplasmic vesicle. The protein resides in the COPI-coated vesicle membrane. Its subcellular location is the endosome. Its function is as follows. The coatomer is a cytosolic protein complex that binds to dilysine motifs and reversibly associates with Golgi non-clathrin-coated vesicles, which further mediate biosynthetic protein transport from the ER, via the Golgi up to the trans Golgi network. Coatomer complex is required for budding from Golgi membranes, and is essential for the retrograde Golgi-to-ER transport of dilysine-tagged proteins. The polypeptide is Coatomer subunit gamma (SEC21) (Saccharomyces cerevisiae (strain ATCC 204508 / S288c) (Baker's yeast)).